Here is a 450-residue protein sequence, read N- to C-terminus: Protein W (450 aa).

Residues 53 to 92 are disordered; the sequence is SGESEQVEGGMSKDDGDVERRNLEDLSSTSPTDGTIGKRV. The segment covering 63 to 76 has biased composition (basic and acidic residues); the sequence is MSKDDGDVERRNLE. A Phosphoserine; by host modification is found at S257. Residues 265–324 form a disordered region; that stretch reads ISPEDEEPSSVGGKPNESIGRTIEGQSIRDNLQAKDNKSTDVPGAGPKDSAVKEEPPQKR. S350 bears the Phosphoserine; by host mark. Disordered regions lie at residues 384–403 and 429–450; these read VQTA…RGIP and PGMF…RMSN. The span at 438 to 450 shows a compositional bias: basic residues; sequence TKKARVSMRRMSN. Residues 439–442 carry the Nuclear localization signal motif; it reads KKAR.

In terms of assembly, interacts with host STAT1.

Its subcellular location is the host nucleus. In terms of biological role, prevent the establishment of cellular antiviral state by blocking the interferon-alpha/beta (IFN-alpha/beta). Interacts with host STAT1 protein in the nucleus, blocking it's phosphorylation by IFN-alpha/beta. Also blocks antiviral state induced by Toll-like receptor 3/TLR3 binding to dsRNA. The sequence is that of Protein W (P/V/C) from Cynopterus brachyotis (Lesser short-nosed fruit bat).